A 405-amino-acid polypeptide reads, in one-letter code: Envelope glycoprotein M (405 aa).

Residues 1-17 lie on the Intravirion side of the membrane; sequence MKSSKNDTFVYRTWVKT. The chain crosses the membrane as a helical span at residues 18-38; the sequence is LVVYFVMFVMSAVVPITAMFP. Residues 39–76 are Virion surface-facing; that stretch reads NLGYPCYFNALVDYGALNLTNYNLAHHLTPTLYLEPPE. The helical transmembrane segment at 77–97 threads the bilayer; sequence MFVYITLVFIADCVAFIYYAC. Over 98–121 the chain is Intravirion; that stretch reads GEVALIKARKKVSGLTDLSAWVSA. A helical membrane pass occupies residues 122–142; sequence VGSPTVLFLAILKLWSIQVFI. The Virion surface portion of the chain corresponds to 143 to 149; it reads QVLSYKH. A helical membrane pass occupies residues 150-170; the sequence is VFLSAFVYFLHFLASVLHACA. Topologically, residues 171-192 are intravirion; that stretch reads CVTRFSPVWVVKAQDNSIPQDT. A helical membrane pass occupies residues 193–215; the sequence is FLWWVVFYLKPVVTNLYLGCLAL. The Virion surface portion of the chain corresponds to 216-245; sequence ETLVFSLSVFLALGNSFYFMVGDMVLGAVN. The chain crosses the membrane as a helical span at residues 246 to 266; sequence LFLILPIFWYILTEVWLASFL. Position 267 (Arg267) is a topological domain, intravirion. The chain crosses the membrane as a helical span at residues 268–288; the sequence is HNFGFYCGMFIASIILILPLV. Residues 289–299 are Virion surface-facing; it reads RYEAVFVSAKL. A helical transmembrane segment spans residues 300-320; the sequence is HTTVAINVAIIPILCSVAMLI. Residues 321–405 are Intravirion-facing; that stretch reads RICRIFKSMR…TTDSEEEIFP (85 aa). Residues 346 to 405 are disordered; that stretch reads LESEPRPRPSRTPSPGRNRRRSSTSSSSSRSTRRQRPVSTQALVSSVLPMTTDSEEEIFP. The span at 386–397 shows a compositional bias: polar residues; that stretch reads QALVSSVLPMTT.

Belongs to the herpesviridae glycoprotein M family. In terms of assembly, interacts (via N-terminus) with gN (via N-terminus). The gM-gN heterodimer forms the gCII complex.

The protein resides in the virion membrane. Its subcellular location is the host Golgi apparatus. It is found in the host trans-Golgi network. The protein localises to the host endosome membrane. It localises to the host nucleus inner membrane. Its function is as follows. Envelope glycoprotein important for virion assembly and egress. Plays a role in the correct incorporation of gH-gL into virion membrane. Directs the glycoprotein N (gN) to the host trans-Golgi network. The sequence is that of Envelope glycoprotein M from Epstein-Barr virus (strain B95-8) (HHV-4).